Here is a 55-residue protein sequence, read N- to C-terminus: Large ribosomal subunit protein bL33 (55 aa).

This sequence belongs to the bacterial ribosomal protein bL33 family.

The chain is Large ribosomal subunit protein bL33 from Bordetella pertussis (strain Tohama I / ATCC BAA-589 / NCTC 13251).